Reading from the N-terminus, the 992-residue chain is Presequence protease, mitochondrial (992 aa).

The transit peptide at 1–30 (MNYAKLSIAFSKKTIKTHNCRLFQRWLHVG) directs the protein to the mitochondrion. His91 lines the Zn(2+) pocket. The active-site Proton acceptor is Glu94. Zn(2+) is bound at residue His95. Residue Glu167 is part of the active site. Glu192 lines the Zn(2+) pocket.

Belongs to the peptidase M16 family. PreP subfamily. In terms of assembly, monomer and homodimer; homodimerization is induced by binding of the substrate. Zn(2+) serves as cofactor.

It is found in the mitochondrion intermembrane space. Its subcellular location is the mitochondrion matrix. Functionally, degrades mitochondrial transit peptides after their cleavage in the intermembrane space or in the matrix, and presequence peptides; clearance of these peptides is required to keep the presequence processing machinery running. Preferentially cleaves the N-terminal side of paired basic amino acid residues. Also degrades other unstructured peptides. May function as an ATP-dependent peptidase as opposed to a metalloendopeptidase. The sequence is that of Presequence protease, mitochondrial (cym1) from Schizosaccharomyces pombe (strain 972 / ATCC 24843) (Fission yeast).